The following is a 72-amino-acid chain: High-potential iron-sulfur protein isozyme 1 (72 aa).

The [4Fe-4S] cluster site is built by cysteine 34, cysteine 37, cysteine 51, and cysteine 65.

Belongs to the high-potential iron-sulfur protein (HiPIP) family. Homodimer.

In terms of biological role, specific class of high-redox-potential 4Fe-4S ferredoxins. Functions in anaerobic electron transport in most purple and in some other photosynthetic bacteria and in at least one genus (Paracoccus) of halophilic, denitrifying bacteria. This chain is High-potential iron-sulfur protein isozyme 1 (hip1), found in Ectothiorhodospira shaposhnikovii (Ectothiorhodospira vacuolata).